Consider the following 217-residue polypeptide: MVKYFLGQSVLRSSWDQVFAAFWQRYPNPYSKHVLTEDIVHREVTPDQKLLSRRLLTKTNRMPRWAERLFPANVAHSVYILEDSIVDPQNQTMTTFTWNINHARLMVVEERCVYCVNSDNSGWTEIRREAWVSSSLFGVSRAVQEFGLARFKSNVTKTMKGFEYILAKLQGEAPSKTLVETAKEAKEKAKETALAATEKAKDLANKAATKQQQRQLV.

The region spanning Thr36–Pro174 is the PRELI/MSF1 domain.

In terms of assembly, forms a complex with TRIAP1 in the mitochondrion intermembrane space. Interacts with OPA1 and AIFM1. As to expression, abundantly expressed in all tissues tested except testis with highest levels in thymus.

It localises to the mitochondrion. The protein resides in the mitochondrion intermembrane space. The enzyme catalyses a 1,2-diacyl-sn-glycero-3-phosphate(in) = a 1,2-diacyl-sn-glycero-3-phosphate(out). Functionally, involved in the modulation of the mitochondrial apoptotic pathway by ensuring the accumulation of cardiolipin (CL) in mitochondrial membranes. In vitro, the TRIAP1:PRELID1 complex mediates the transfer of phosphatidic acid (PA) between liposomes and probably functions as a PA transporter across the mitochondrion intermembrane space to provide PA for CL synthesis in the inner membrane. Regulates the mitochondrial apoptotic pathway in primary Th cells. Regulates Th cell differentiation by down-regulating STAT6 thereby reducing IL-4-induced Th2 cell number. May be important for the development of vital and immunocompetent organs. The protein is PRELI domain-containing protein 1, mitochondrial (Prelid1) of Mus musculus (Mouse).